Here is a 149-residue protein sequence, read N- to C-terminus: Nucleoside diphosphate kinase (149 aa).

ATP contacts are provided by lysine 9, phenylalanine 57, arginine 85, threonine 91, arginine 102, and asparagine 112. The Pros-phosphohistidine intermediate role is filled by histidine 115.

It belongs to the NDK family. In terms of assembly, homotetramer. Mg(2+) is required as a cofactor.

It localises to the cytoplasm. The catalysed reaction is a 2'-deoxyribonucleoside 5'-diphosphate + ATP = a 2'-deoxyribonucleoside 5'-triphosphate + ADP. It catalyses the reaction a ribonucleoside 5'-diphosphate + ATP = a ribonucleoside 5'-triphosphate + ADP. Functionally, major role in the synthesis of nucleoside triphosphates other than ATP. The ATP gamma phosphate is transferred to the NDP beta phosphate via a ping-pong mechanism, using a phosphorylated active-site intermediate. This is Nucleoside diphosphate kinase from Desulforamulus reducens (strain ATCC BAA-1160 / DSM 100696 / MI-1) (Desulfotomaculum reducens).